We begin with the raw amino-acid sequence, 362 residues long: MARMSLMIMMIMVAVTMINIAKSDPIAPCYFIFGDSLVDNGNNNQLQSLARANYFPYGIDFAAGPTGRFSNGLTTVDVIAQLLGFEDYITPYASARGQDILRGVNYASAAAGIRDETGRQLGGRIAFAGQVANHVNTVSQVVNILGDQNEASNYLSKCIYSIGLGSNDYLNNYFMPTFYSTGNQFSPESYADDLVARYTEQLRVLYTNGARKFALIGVGAIGCSPNELAQNSRDGRTCDERINSANRIFNSKLISIVDAFNQNTPDAKFTYINAYGIFQDIITNPARYGFRVTNAGCCGVGRNNGQITCLPGQAPCLNRNEYVFWDAFHPGEAANIVIGRRSFKREAASDAHPYDIQQLASL.

The signal sequence occupies residues 1–23; the sequence is MARMSLMIMMIMVAVTMINIAKS. Catalysis depends on S36, which acts as the Nucleophile. Catalysis depends on residues D326 and H329.

It belongs to the 'GDSL' lipolytic enzyme family.

Its subcellular location is the secreted. The protein is GDSL esterase/lipase At5g45670 of Arabidopsis thaliana (Mouse-ear cress).